A 134-amino-acid polypeptide reads, in one-letter code: Ribosome-binding factor A (134 aa).

This sequence belongs to the RbfA family. In terms of assembly, monomer. Binds 30S ribosomal subunits, but not 50S ribosomal subunits or 70S ribosomes.

The protein resides in the cytoplasm. One of several proteins that assist in the late maturation steps of the functional core of the 30S ribosomal subunit. Associates with free 30S ribosomal subunits (but not with 30S subunits that are part of 70S ribosomes or polysomes). Required for efficient processing of 16S rRNA. May interact with the 5'-terminal helix region of 16S rRNA. The chain is Ribosome-binding factor A from Sinorhizobium medicae (strain WSM419) (Ensifer medicae).